A 215-amino-acid chain; its full sequence is Autophagy-related protein 101 (215 aa).

Residues 124-147 (PVGKSHHSKLVMDPGEASEERSSR) are disordered.

The protein belongs to the ATG101 family. Interacts with ATG11 and ATG13A.

It is found in the cytoplasmic vesicle. The protein resides in the autophagosome. In terms of biological role, accessory protein involved in autophagy. Acts as a scaffold protein of the ATG1-ATG13 complex for faithful delivery of autophagic vesicles to the vacuole. Required for selective mitophagy. The chain is Autophagy-related protein 101 from Arabidopsis thaliana (Mouse-ear cress).